Consider the following 598-residue polypeptide: Elongation factor 4 (598 aa).

Residues 4–181 (KKIRNFAIIA…AIVNLIPPPQ (178 aa)) form the tr-type G domain. GTP is bound by residues 16–21 (DHGKST) and 128–131 (NKID).

Belongs to the TRAFAC class translation factor GTPase superfamily. Classic translation factor GTPase family. LepA subfamily.

Its subcellular location is the cell membrane. It carries out the reaction GTP + H2O = GDP + phosphate + H(+). Functionally, required for accurate and efficient protein synthesis under certain stress conditions. May act as a fidelity factor of the translation reaction, by catalyzing a one-codon backward translocation of tRNAs on improperly translocated ribosomes. Back-translocation proceeds from a post-translocation (POST) complex to a pre-translocation (PRE) complex, thus giving elongation factor G a second chance to translocate the tRNAs correctly. Binds to ribosomes in a GTP-dependent manner. The chain is Elongation factor 4 from Mesomycoplasma hyopneumoniae (strain 7448) (Mycoplasma hyopneumoniae).